Reading from the N-terminus, the 297-residue chain is GTPase Era (297 aa).

Positions 5 to 173 constitute an Era-type G domain; sequence RAGFVSFVGR…TTELMRLLPV (169 aa). The segment at 13 to 20 is G1; sequence GRPNVGKS. 13-20 is a binding site for GTP; that stretch reads GRPNVGKS. The G2 stretch occupies residues 39–43; it reads QTTRR. The tract at residues 60–63 is G3; that stretch reads DTPG. Residues 60-64 and 123-126 contribute to the GTP site; these read DTPGV and TKID. The tract at residues 123–126 is G4; the sequence is TKID. The G5 stretch occupies residues 152–154; that stretch reads VSA. A KH type-2 domain is found at 205–283; it reads VEDELPHSLA…FLSIRVKVAK (79 aa).

The protein belongs to the TRAFAC class TrmE-Era-EngA-EngB-Septin-like GTPase superfamily. Era GTPase family. Monomer.

It is found in the cytoplasm. It localises to the cell membrane. In terms of biological role, an essential GTPase that binds both GDP and GTP, with rapid nucleotide exchange. Plays a role in 16S rRNA processing and 30S ribosomal subunit biogenesis and possibly also in cell cycle regulation and energy metabolism. This is GTPase Era from Leifsonia xyli subsp. xyli (strain CTCB07).